The sequence spans 378 residues: Chaperone protein DnaJ (378 aa).

The J domain occupies 6–70 (DYYDVLGVSR…QKRQQYDQFG (65 aa)). A CR-type zinc finger spans residues 137–219 (GKTSEISYSR…CHGKGVKTQK (83 aa)). Cysteine 150, cysteine 153, cysteine 167, cysteine 170, cysteine 193, cysteine 196, cysteine 207, and cysteine 210 together coordinate Zn(2+). CXXCXGXG motif repeat units lie at residues 150–157 (CEVCKGSG), 167–174 (CDKCGGSG), 193–200 (CDKCTGSG), and 207–214 (CHNCHGKG).

This sequence belongs to the DnaJ family. In terms of assembly, homodimer. Zn(2+) serves as cofactor.

It localises to the cytoplasm. Its function is as follows. Participates actively in the response to hyperosmotic and heat shock by preventing the aggregation of stress-denatured proteins and by disaggregating proteins, also in an autonomous, DnaK-independent fashion. Unfolded proteins bind initially to DnaJ; upon interaction with the DnaJ-bound protein, DnaK hydrolyzes its bound ATP, resulting in the formation of a stable complex. GrpE releases ADP from DnaK; ATP binding to DnaK triggers the release of the substrate protein, thus completing the reaction cycle. Several rounds of ATP-dependent interactions between DnaJ, DnaK and GrpE are required for fully efficient folding. Also involved, together with DnaK and GrpE, in the DNA replication of plasmids through activation of initiation proteins. This Lactobacillus delbrueckii subsp. bulgaricus (strain ATCC 11842 / DSM 20081 / BCRC 10696 / JCM 1002 / NBRC 13953 / NCIMB 11778 / NCTC 12712 / WDCM 00102 / Lb 14) protein is Chaperone protein DnaJ.